The primary structure comprises 217 residues: Methylthioribulose-1-phosphate dehydratase (217 aa).

His-106 and His-108 together coordinate Zn(2+).

It belongs to the aldolase class II family. MtnB subfamily. It depends on Zn(2+) as a cofactor.

The enzyme catalyses 5-(methylsulfanyl)-D-ribulose 1-phosphate = 5-methylsulfanyl-2,3-dioxopentyl phosphate + H2O. The protein operates within amino-acid biosynthesis; L-methionine biosynthesis via salvage pathway; L-methionine from S-methyl-5-thio-alpha-D-ribose 1-phosphate: step 2/6. Functionally, catalyzes the dehydration of methylthioribulose-1-phosphate (MTRu-1-P) into 2,3-diketo-5-methylthiopentyl-1-phosphate (DK-MTP-1-P). The sequence is that of Methylthioribulose-1-phosphate dehydratase from Xanthomonas campestris pv. campestris (strain 8004).